We begin with the raw amino-acid sequence, 171 residues long: Shikimate kinase (171 aa).

13–18 (GVGKST) contributes to the ATP binding site. S17 is a binding site for Mg(2+). Residues D35, R59, and G81 each contribute to the substrate site. R118 contacts ATP. A substrate-binding site is contributed by R136. An ATP-binding site is contributed by R153.

Belongs to the shikimate kinase family. Monomer. Requires Mg(2+) as cofactor.

The protein localises to the cytoplasm. The enzyme catalyses shikimate + ATP = 3-phosphoshikimate + ADP + H(+). It participates in metabolic intermediate biosynthesis; chorismate biosynthesis; chorismate from D-erythrose 4-phosphate and phosphoenolpyruvate: step 5/7. Functionally, catalyzes the specific phosphorylation of the 3-hydroxyl group of shikimic acid using ATP as a cosubstrate. This chain is Shikimate kinase, found in Streptomyces avermitilis (strain ATCC 31267 / DSM 46492 / JCM 5070 / NBRC 14893 / NCIMB 12804 / NRRL 8165 / MA-4680).